A 60-amino-acid chain; its full sequence is Large ribosomal subunit protein bL32 (60 aa).

The protein belongs to the bacterial ribosomal protein bL32 family.

This Petrotoga mobilis (strain DSM 10674 / SJ95) protein is Large ribosomal subunit protein bL32.